A 131-amino-acid chain; its full sequence is Glycine cleavage system H protein (131 aa).

Positions 24–106 (TVRVGITDYA…YGEGWLVELQ (83 aa)) constitute a Lipoyl-binding domain. Residue Lys-65 is modified to N6-lipoyllysine.

The protein belongs to the GcvH family. As to quaternary structure, the glycine cleavage system is composed of four proteins: P, T, L and H. (R)-lipoate serves as cofactor.

In terms of biological role, the glycine cleavage system catalyzes the degradation of glycine. The H protein shuttles the methylamine group of glycine from the P protein to the T protein. The chain is Glycine cleavage system H protein from Mycolicibacterium gilvum (strain PYR-GCK) (Mycobacterium gilvum (strain PYR-GCK)).